The primary structure comprises 197 residues: Peptidyl-tRNA hydrolase (197 aa).

TRNA is bound at residue Y21. Catalysis depends on H26, which acts as the Proton acceptor. Y72, N74, and N120 together coordinate tRNA.

Belongs to the PTH family. Monomer.

Its subcellular location is the cytoplasm. It catalyses the reaction an N-acyl-L-alpha-aminoacyl-tRNA + H2O = an N-acyl-L-amino acid + a tRNA + H(+). In terms of biological role, hydrolyzes ribosome-free peptidyl-tRNAs (with 1 or more amino acids incorporated), which drop off the ribosome during protein synthesis, or as a result of ribosome stalling. Functionally, catalyzes the release of premature peptidyl moieties from peptidyl-tRNA molecules trapped in stalled 50S ribosomal subunits, and thus maintains levels of free tRNAs and 50S ribosomes. The protein is Peptidyl-tRNA hydrolase of Saccharophagus degradans (strain 2-40 / ATCC 43961 / DSM 17024).